A 537-amino-acid polypeptide reads, in one-letter code: Glutamyl-tRNA reductase, chloroplastic (537 aa).

The transit peptide at 1–48 directs the protein to the chloroplast; it reads MMASTTSATAAGGAFAAAKTRAGSSAAGGGACARVAAGGRRRSGVVVR. Residues 134–137, serine 194, 199–201, and glutamine 205 contribute to the substrate site; these read TCNR and EGQ. Cysteine 135 serves as the catalytic Nucleophile. 276–281 serves as a coordination point for NADP(+); the sequence is GAGKMG.

It belongs to the glutamyl-tRNA reductase family.

It localises to the plastid. It is found in the chloroplast. The catalysed reaction is (S)-4-amino-5-oxopentanoate + tRNA(Glu) + NADP(+) = L-glutamyl-tRNA(Glu) + NADPH + H(+). It participates in porphyrin-containing compound metabolism; protoporphyrin-IX biosynthesis; 5-aminolevulinate from L-glutamyl-tRNA(Glu): step 1/2. Its function is as follows. Catalyzes the NADPH-dependent reduction of glutamyl-tRNA(Glu) to glutamate 1-semialdehyde (GSA). This Oryza sativa subsp. japonica (Rice) protein is Glutamyl-tRNA reductase, chloroplastic.